Here is a 316-residue protein sequence, read N- to C-terminus: Putative phosphoribosylaminoimidazole-succinocarboxamide synthase 2 (316 aa).

The protein belongs to the SAICAR synthetase family.

The enzyme catalyses 5-amino-1-(5-phospho-D-ribosyl)imidazole-4-carboxylate + L-aspartate + ATP = (2S)-2-[5-amino-1-(5-phospho-beta-D-ribosyl)imidazole-4-carboxamido]succinate + ADP + phosphate + 2 H(+). It functions in the pathway purine metabolism; IMP biosynthesis via de novo pathway; 5-amino-1-(5-phospho-D-ribosyl)imidazole-4-carboxamide from 5-amino-1-(5-phospho-D-ribosyl)imidazole-4-carboxylate: step 1/2. This is Putative phosphoribosylaminoimidazole-succinocarboxamide synthase 2 (purC2) from Agrobacterium fabrum (strain C58 / ATCC 33970) (Agrobacterium tumefaciens (strain C58)).